Here is an 883-residue protein sequence, read N- to C-terminus: Brevican core protein (883 aa).

Residues 1-22 (MIPLLLSLLAALVLTQAPAALA) form the signal peptide. Positions 35-154 (FRVRIGATQL…SSDAVEVKVK (120 aa)) constitute an Ig-like V-type domain. 5 disulfides stabilise this stretch: Cys56–Cys136, Cys178–Cys249, Cys202–Cys223, Cys276–Cys351, and Cys300–Cys321. A glycan (N-linked (GlcNAc...) asparagine) is linked at Asn129. Link domains lie at 156-251 (VVFL…YCYA) and 256-353 (GELF…YCFR). Ser224 bears the Phosphoserine mark. Asn336 carries an N-linked (GlcNAc...) asparagine glycan. Positions 402-592 (SIPISEDGGG…LETPSEEKSG (191 aa)) are disordered. Ser413 is subject to Phosphoserine. Ser413 carries an O-linked (Xyl...) (chondroitin sulfate) serine glycan. 2 stretches are compositionally biased toward acidic residues: residues 440-451 (SSEEEGVALEEE) and 459-468 (ALEEEKEQED). Residues 479–495 (PLPTGSETEHSLSQVSP) show a composition bias toward polar residues. A compositionally biased stretch (basic and acidic residues) spans 581–592 (RELETPSEEKSG). The region spanning 622-658 (SSGDCIPSPCHNGGTCLEEKEGFRCLCLPGYGGDLCD) is the EGF-like domain. Intrachain disulfides connect Cys626/Cys637, Cys631/Cys646, Cys648/Cys657, Cys664/Cys675, Cys692/Cys784, Cys760/Cys776, Cys791/Cys834, and Cys820/Cys847. The C-type lectin domain occupies 658–786 (DVGLHFCSPG…NYHLSYTCKM (129 aa)). In terms of domain architecture, Sushi spans 789–849 (VSCGPPPQLP…WEAPQISCVP (61 aa)). A disordered region spans residues 854-883 (RALRSMDAPEGPRGQLSRHRKAPLTPPSSL).

The protein belongs to the aggrecan/versican proteoglycan family. Interacts with TNR. O-glycosylated; contains chondroitin sulfate. In terms of tissue distribution, expressed in the retina, specifically around the inner and outer segments of photoreceptors, retinal pigment epithelium, outer plexiform layer, and the ganglion cell layer (at protein level). Brain. Expressed in the brainstem and cerebellum in a perineuronal net pattern.

It is found in the secreted. The protein resides in the extracellular space. Its subcellular location is the extracellular matrix. Functionally, may play a role in the terminally differentiating and the adult nervous system during postnatal development. Could stabilize interactions between hyaluronan (HA) and brain proteoglycans. The sequence is that of Brevican core protein (Bcan) from Mus musculus (Mouse).